A 415-amino-acid polypeptide reads, in one-letter code: uncharacterized protein (415 aa).

The [4Fe-4S] cluster site is built by cysteine 276 and cysteine 316.

As to quaternary structure, homodimer. It depends on [4Fe-4S] cluster as a cofactor.

This is an uncharacterized protein from Methanocaldococcus jannaschii (strain ATCC 43067 / DSM 2661 / JAL-1 / JCM 10045 / NBRC 100440) (Methanococcus jannaschii).